A 666-amino-acid polypeptide reads, in one-letter code: Vicilin-like antimicrobial peptides 2-1 (666 aa).

The first 27 residues, 1-27 (MAINTSNLCSLLFLLSLFLLSTTVSLA), serve as a signal peptide directing secretion. 2 disordered regions span residues 161 to 191 (QQKR…DPQQ) and 219 to 254 (QQRQ…PYYF). 2 Cupin type-1 domains span residues 271–410 (SVLE…EKLR) and 455–625 (YNLF…KEVE). Positions 629–655 (NSQDQSIFFPGPRQHQQQSPRSTKQQQ) are disordered. Residues 642–655 (QHQQQSPRSTKQQQ) show a composition bias toward low complexity.

Belongs to the 7S seed storage protein family.

The protein localises to the secreted. Functionally, antimicrobial peptides 2b, 2c and 2d have antibacterial and antifungal activity against a range of species. This Macadamia integrifolia (Macadamia nut) protein is Vicilin-like antimicrobial peptides 2-1.